The primary structure comprises 140 residues: Putative esterase SSO2140 (140 aa).

This sequence belongs to the thioesterase PaaI family.

In Saccharolobus solfataricus (strain ATCC 35092 / DSM 1617 / JCM 11322 / P2) (Sulfolobus solfataricus), this protein is Putative esterase SSO2140.